The primary structure comprises 191 residues: Adenylate kinase (191 aa).

11–16 (GSGKGT) is a binding site for ATP. The segment at 31–60 (STGEILRREIKDKTELGKIAEEYINQGQLL) is NMP. Residues Thr-32, Arg-37, 58-60 (QLL), 86-89 (GFPR), and Gln-93 each bind AMP. Residues 127 to 137 (KRGKLFSRKDD) are LID. An ATP-binding site is contributed by Arg-128. The AMP site is built by Arg-134 and Arg-145. Asn-173 contacts ATP.

The protein belongs to the adenylate kinase family. In terms of assembly, monomer.

The protein localises to the cytoplasm. The catalysed reaction is AMP + ATP = 2 ADP. Its pathway is purine metabolism; AMP biosynthesis via salvage pathway; AMP from ADP: step 1/1. Catalyzes the reversible transfer of the terminal phosphate group between ATP and AMP. Plays an important role in cellular energy homeostasis and in adenine nucleotide metabolism. This is Adenylate kinase from Azobacteroides pseudotrichonymphae genomovar. CFP2.